A 158-amino-acid polypeptide reads, in one-letter code: Cyclic pyranopterin monophosphate synthase (158 aa).

Substrate is bound by residues 76–78 (LCH) and 114–115 (ME). Residue aspartate 129 is part of the active site.

It belongs to the MoaC family. As to quaternary structure, homohexamer; trimer of dimers.

The enzyme catalyses (8S)-3',8-cyclo-7,8-dihydroguanosine 5'-triphosphate = cyclic pyranopterin phosphate + diphosphate. The protein operates within cofactor biosynthesis; molybdopterin biosynthesis. Its function is as follows. Catalyzes the conversion of (8S)-3',8-cyclo-7,8-dihydroguanosine 5'-triphosphate to cyclic pyranopterin monophosphate (cPMP). This chain is Cyclic pyranopterin monophosphate synthase, found in Shewanella baltica (strain OS155 / ATCC BAA-1091).